Consider the following 79-residue polypeptide: U-actitoxin-Avd8a (79 aa).

The first 19 residues, 1-19 (MKSLVIVFVVLLGVAMISA), serve as a signal peptide directing secretion. Residues 20 to 36 (NEEELLAILQDQRNDAR) constitute a propeptide that is removed on maturation.

This sequence belongs to the sea anemone 8 toxin family.

Its subcellular location is the secreted. It localises to the nematocyst. The sequence is that of U-actitoxin-Avd8a from Anemonia viridis (Snakelocks anemone).